A 195-amino-acid polypeptide reads, in one-letter code: MILIIDNYDSFSYNLVQSVGEINSDLIVLRSDEIDVSKLQNLNIKHIIISPGPGHPDEYTICKQVVKFFAPYTPILGICLGHQIIATCYNASIKKSSPVFHGRASKIYCLKDKLFLGIHAPFTAARYHSLVVDQDKRGLDLTTCLKTIAITREGVIMACKHRYYHFTYGIQFHPESMLTIQGTKLLKNFLSLSYG.

Residues 1-195 form the Glutamine amidotransferase type-1 domain; the sequence is MILIIDNYDS…LKNFLSLSYG (195 aa). 52–54 contributes to the L-glutamine binding site; it reads GPG. The active-site Nucleophile; for GATase activity is the cysteine 79. Residues glutamine 83 and 129 to 130 each bind L-glutamine; that span reads SL. Residues histidine 173 and glutamate 175 contribute to the active site.

As to quaternary structure, tetramer of two components I and two components II.

Its subcellular location is the plastid. It localises to the chloroplast. It carries out the reaction chorismate + L-glutamine = anthranilate + pyruvate + L-glutamate + H(+). The protein operates within amino-acid biosynthesis; L-tryptophan biosynthesis; L-tryptophan from chorismate: step 1/5. This is Anthranilate synthase component 2 (trpG) from Cyanidium caldarium (Red alga).